A 62-amino-acid chain; its full sequence is MLSEEEIEYRRRDARNALASQRLEGLEPDPQVVAQMERVVVGELETSDVIKDLMERIKREEI.

An Inhibitory (S/T)XXXE(G/N) motif motif is present at residues serine 20–glycine 25. Glutamate 24 provides a ligand contact to ATP.

Interacts with VbhT.

Functionally, antitoxin component of type II toxin-antitoxin (TA) system VbhT-VbhA. Acts by inhibiting the adenylyltransferase activity of VbhT; competes with ATP-binding and prevents productive ATP-binding to VbhT. In Bartonella schoenbuchensis (strain DSM 13525 / NCTC 13165 / R1), this protein is Antitoxin VbhA.